A 68-amino-acid polypeptide reads, in one-letter code: Alpha-conotoxin Lp1.4 (68 aa).

Residues 1–21 (MGMRMMSIMFMLVVLATTVVS) form the signal peptide. Positions 22–48 (FTSDRALDAMNAAASKKASRLIALAVR) are excised as a propeptide. Disulfide bonds link Cys50/Cys56 and Cys51/Cys64. The ser-Xaa-Pro motif, crucial for potent interaction with nAChR stretch occupies residues 52-54 (SHP). Asp65 carries the post-translational modification Aspartic acid 1-amide.

This sequence belongs to the conotoxin A superfamily. As to expression, expressed by the venom duct.

It is found in the secreted. Functionally, alpha-conotoxins act on postsynaptic membranes, they bind to the nicotinic acetylcholine receptors (nAChR) and thus inhibit them. This toxin inhibits mouse muscle alpha-1-beta-1-gamma-delta (CHRNA1-CHRNB1-CHRNG-CHRND), and weakly rat neuronal alpha-6/alpha-3-beta-2 (CHRNA6/CHRNA3-CHRNB2). The sequence is that of Alpha-conotoxin Lp1.4 from Conus leopardus (Leopard cone).